We begin with the raw amino-acid sequence, 469 residues long: Repressible acid phosphatase (469 aa).

Residues 1-16 (MLSILLSLLSLSGTHA) form the signal peptide. 2 N-linked (GlcNAc...) asparagine glycosylation sites follow: Asn23 and Asn31. The Nucleophile role is filled by His77. Residues Asn129, Asn201, Asn229, Asn250, and Asn317 are each glycosylated (N-linked (GlcNAc...) asparagine). The Proton donor role is filled by Asp340. Asn392 and Asn447 each carry an N-linked (GlcNAc...) asparagine glycan.

Belongs to the histidine acid phosphatase family. Glycosylated during secretion across the membrane.

It is found in the secreted. It catalyses the reaction a phosphate monoester + H2O = an alcohol + phosphate. This chain is Repressible acid phosphatase (PHO5), found in Kluyveromyces lactis (strain ATCC 8585 / CBS 2359 / DSM 70799 / NBRC 1267 / NRRL Y-1140 / WM37) (Yeast).